We begin with the raw amino-acid sequence, 229 residues long: Large ribosomal subunit protein bL19cy (229 aa).

The N-terminal 70 residues, 1–70, are a transit peptide targeting the chloroplast; that stretch reads MATSSHLLPQ…DSKKRKEFIA (70 aa).

The protein belongs to the bacterial ribosomal protein bL19 family. As to quaternary structure, part of the 50S ribosomal subunit.

The protein localises to the plastid. It is found in the chloroplast. Functionally, located at the 30S-50S ribosomal subunit interface and binds directly to 23S ribosomal RNA. This Arabidopsis thaliana (Mouse-ear cress) protein is Large ribosomal subunit protein bL19cy.